The sequence spans 542 residues: Chaperonin GroEL (542 aa).

ATP is bound by residues 29-32, 86-90, glycine 413, 477-479, and aspartate 493; these read TLGP, DGTTT, and NAA.

Belongs to the chaperonin (HSP60) family. In terms of assembly, forms a cylinder of 14 subunits composed of two heptameric rings stacked back-to-back. Interacts with the co-chaperonin GroES.

It is found in the cytoplasm. The catalysed reaction is ATP + H2O + a folded polypeptide = ADP + phosphate + an unfolded polypeptide.. Functionally, together with its co-chaperonin GroES, plays an essential role in assisting protein folding. The GroEL-GroES system forms a nano-cage that allows encapsulation of the non-native substrate proteins and provides a physical environment optimized to promote and accelerate protein folding. In Heliobacterium modesticaldum (strain ATCC 51547 / Ice1), this protein is Chaperonin GroEL.